A 140-amino-acid chain; its full sequence is Gonadotropin subunit beta-2 (140 aa).

An N-terminal signal peptide occupies residues 1-23 (MGTPVKILVVLFSVIVLLAVAQS). 6 disulfides stabilise this stretch: Cys-29-Cys-77, Cys-43-Cys-92, Cys-46-Cys-130, Cys-54-Cys-108, Cys-58-Cys-110, and Cys-113-Cys-120. An N-linked (GlcNAc...) asparagine glycan is attached at Asn-33.

This sequence belongs to the glycoprotein hormones subunit beta family. Heterodimer of an alpha and a beta chain.

The protein localises to the secreted. Involved in gametogenesis and steroidogenesis. The chain is Gonadotropin subunit beta-2 (cgbb) from Carassius auratus (Goldfish).